A 326-amino-acid polypeptide reads, in one-letter code: MSKHITEEQRYAISMMLQIPMSKKAIAEAIGVDKSTVYREIKRNCDARSGSYSMELAQRKADRRKQQKHRKEVLTPAMRKRIIKLLKKGFSPEQIVGRSRLEGIAMVSHETIYRWIWEDKRRGGKLHKYLRRQGRRYAKRGSKNAGRGFIPGRVDIDERPEIVELKERFGDLEIDTIIGKNHKGAILTINDRATSRVWIRKLSGKEAIPVAKIAVWALRKVKNLIHTITADNGKEFAKHEEIAQKLEIKFYFCKPYHSWERGANENTNGLIRQYIPKGKDFSEVTNKQIKWIENKLNNRPRKRLGYLTPNEKFKQIINQNSVAFAS.

Residues 156–317 (IDERPEIVEL…TPNEKFKQII (162 aa)) form the Integrase catalytic domain.

Belongs to the transposase IS30 family.

In terms of biological role, required for the transposition of the insertion element. The sequence is that of Transposase for insertion sequence element IS4351 from Bacteroides fragilis.